We begin with the raw amino-acid sequence, 210 residues long: Protein DrgA (210 aa).

It belongs to the nitroreductase family. Requires FMN as cofactor.

Controls resistance to the herbicide Dinoseb and metronidazole. Involved in detoxification of Dinoseb via the reduction of the nitro group(s) and this process is accompanied by the formation of toxic superoxide anions. This is Protein DrgA (drgA) from Synechocystis sp. (strain ATCC 27184 / PCC 6803 / Kazusa).